The chain runs to 221 residues: Nucleolar protein 3 (221 aa).

Gly2 is lipidated: N-myristoyl glycine. Residues 4–95 (MQERPSETID…MPDPAWDWQH (92 aa)) enclose the CARD domain. Residues 20–70 (VETLQADSGLLLDALVARGVLTGPEYEALDALPDAERRVRRLLLLVQSKGE) are essential for interaction with BAX. Residues 107–221 (PPCPGHWTPE…GDESEGCENT (115 aa)) form a disordered region. Residues 132–143 (EEEEIGGPEDSE) are compositionally biased toward acidic residues. The residue at position 149 (Thr149) is a Phosphothreonine; by CK2. Acidic residues-rich tracts occupy residues 165–201 (PDLEQEMEPEPEPEVEPEPEPEPEPEPEPEPEPEPEP) and 209–221 (FQEGDESEGCENT).

Oligomerizes (via CARD doamin). Interacts (via CARD domain) with CASP2; inhibits CASP2 activity in a phosphorylation-dependent manner. Interacts with CASP8; decreases CASP8 activity in a mitochondria localization- and phosphorylation-dependent manner and this interaction is dissociated by calcium. Interacts with TFPT; translocates NOL3 into the nucleus and negatively regulated TFPT-induced cell death. Interacts directly (via CARD domain) with FAS and FADD (via DED domain); inhibits death-inducing signaling complex (DISC) assembly by inhibiting the increase in FAS-FADD binding induced by FAS activation. Interacts (via CARD domain) with BAX (via a C-terminal 33 residues); inhibits BAX activation and translocation and consequently cytochrome c release from mitochondria. Interacts with PPM1G; may dephosphorylate NOL3. Interacts (via CARD domain) with BBC3 (via BH3 domain); preventing the association of BBC3 with BCL2 and resulting in activation of CASP8. Interacts (via CARD domain) with BAD(via BH3 domain); preventing the association of BAD with BCL2. Interacts directly (via CARD domain) with TNFRSF1A; inhibits TNF-signaling pathway. Post-translationally, phosphorylation at Thr-149 is required for its antiapoptotic effect by blocking death-inducing signaling complex (DISC) activity through the control of interaction with CASP8. Phosphorylation at Thr-149 results in translocation to mitochondria and this translocation enables the binding to CASP8. Dephosphorylated at Thr-149 by calcineurin; doesn't inhibit the association between FADD and CASP8 and the consequent apoptosis. In terms of processing, polyubiquitinated by MDM2; promoting proteasomal-dependent degradation in response to apoptotic stimuli. As to expression, highly expressed in skeletal muscle, heart and medulla.

The protein localises to the cytoplasm. It is found in the mitochondrion. Its subcellular location is the sarcoplasmic reticulum. It localises to the membrane. Apoptosis repressor that blocks multiple modes of cell death. Inhibits extrinsic apoptotic pathways through two different ways. Firstly by interacting with FAS and FADD upon FAS activation blocking death-inducing signaling complex (DISC) assembly. Secondly by interacting with CASP8 in a mitochondria localization- and phosphorylation-dependent manner, limiting the amount of soluble CASP8 available for DISC-mediated activation. Inhibits intrinsic apoptotic pathway in response to a wide range of stresses, through its interaction with BAX resulting in BAX inactivation, preventing mitochondrial dysfunction and release of pro-apoptotic factors. Inhibits calcium-mediated cell death by functioning as a cytosolic calcium buffer, dissociating its interaction with CASP8 and maintaining calcium homeostasis. Negatively regulates oxidative stress-induced apoptosis by phosphorylation-dependent suppression of the mitochondria-mediated intrinsic pathway, by blocking CASP2 activation and BAX translocation. Negatively regulates hypoxia-induced apoptosis in part by inhibiting the release of cytochrome c from mitochondria in a caspase-independent manner. Also inhibits TNF-induced necrosis by preventing TNF-signaling pathway through TNFRSF1A interaction abrogating the recruitment of RIPK1 to complex I. Finally through its role as apoptosis repressor, promotes vascular remodeling through inhibition of apoptosis and stimulation of proliferation, in response to hypoxia. Inhibits too myoblast differentiation through caspase inhibition. The chain is Nucleolar protein 3 (Nol3) from Rattus norvegicus (Rat).